A 250-amino-acid polypeptide reads, in one-letter code: MRLLSGASASRIPCPLLSLARARARCLPVPASATACRAASSSAAAAAGDGGALKPWLFVGLGNPGKVYQGTRHNVGFEMIDVIAEAEGISLSSMQFKAMVGKGRIGDAPIMLAKPQTFMNASGESVGQLVSYFKIPLNQVLVMYDDLDLPFAKLRLLPKGGHGGHNGVRSIINHLKQNRDFPRLRIGIGRPPGKMDPANFVLRPFNRKEQEELDFAFHRGLEAVRIMALEGFNKSATYVNTAQSSEMLNR.

Residues Met-1–Ala-45 constitute a mitochondrion transit peptide. Residue Tyr-68 coordinates tRNA. His-73 (proton acceptor) is an active-site residue. TRNA contacts are provided by Phe-118, Asn-120, and Asn-166.

The protein belongs to the PTH family.

The protein resides in the mitochondrion. The enzyme catalyses an N-acyl-L-alpha-aminoacyl-tRNA + H2O = an N-acyl-L-amino acid + a tRNA + H(+). The natural substrate for this enzyme may be peptidyl-tRNAs which drop off the ribosome during protein synthesis. The sequence is that of Peptidyl-tRNA hydrolase, mitochondrial from Oryza sativa subsp. japonica (Rice).